A 592-amino-acid polypeptide reads, in one-letter code: Serine/threonine-protein kinase ksg1 (592 aa).

Positions 1 to 10 (MRNTHNPNET) are enriched in polar residues. The tract at residues 1 to 92 (MRNTHNPNET…NPSSGASTPN (92 aa)) is disordered. The span at 11–22 (EASEDAENDTQS) shows a compositional bias: acidic residues. Basic and acidic residues predominate over residues 27-37 (SFDHGSSEKLN). Polar residues predominate over residues 42 to 68 (PKTQNSAIPQSNALNTTPNESTSQIDS). Phosphoserine occurs at positions 64 and 69. The segment covering 80-92 (STPNPSSGASTPN) has biased composition (polar residues). Positions 99–366 (FKFGEILGEG…VDEIHQHPFF (268 aa)) constitute a Protein kinase domain. ATP contacts are provided by residues 109–111 (SYS) and Lys128. Residues 130 to 175 (LDKRHIIKEKKEKYVNIEKEALCILSKHPGFIKLFYTFQDAHNLYF) form a PIF-pocket region. ATP contacts are provided by residues 178-180 (SLA) and Glu184. Catalysis depends on Asp223, which acts as the Proton acceptor. 2 residues coordinate ATP: Glu227 and Asp241. Residues 461 to 572 (ISKIGTLNVY…ELLDKASSIS (112 aa)) form the PH domain.

The protein belongs to the protein kinase superfamily. AGC Ser/Thr protein kinase family. PDPK1 subfamily.

The protein resides in the cytoplasm. It carries out the reaction L-seryl-[protein] + ATP = O-phospho-L-seryl-[protein] + ADP + H(+). It catalyses the reaction L-threonyl-[protein] + ATP = O-phospho-L-threonyl-[protein] + ADP + H(+). In terms of biological role, involved in the control of sexual development and cell growth under stressed conditions. Phosphorylates AGC kinase gad8 at 'Thr-387', activating gad8 kinase activity and promoting sexual development. Phosphorylates AGC kinase psk1 at 'Ser-248', activating psk1 kinase activity and promoting phosphorylation of ribosomal protein S6. The polypeptide is Serine/threonine-protein kinase ksg1 (Schizosaccharomyces pombe (strain 972 / ATCC 24843) (Fission yeast)).